An 88-amino-acid chain; its full sequence is Small ribosomal subunit protein bS20 (88 aa).

The segment at 1-27 (MANTPQAKKRARQNEKARKHNASMRSM) is disordered. Positions 7–22 (AKKRARQNEKARKHNA) are enriched in basic residues.

It belongs to the bacterial ribosomal protein bS20 family.

Its function is as follows. Binds directly to 16S ribosomal RNA. This chain is Small ribosomal subunit protein bS20, found in Cellvibrio japonicus (strain Ueda107) (Pseudomonas fluorescens subsp. cellulosa).